A 275-amino-acid chain; its full sequence is Ribosomal protein L11 methyltransferase (275 aa).

The S-adenosyl-L-methionine site is built by T123, G146, D167, and N208.

This sequence belongs to the methyltransferase superfamily. PrmA family.

The protein localises to the cytoplasm. The enzyme catalyses L-lysyl-[protein] + 3 S-adenosyl-L-methionine = N(6),N(6),N(6)-trimethyl-L-lysyl-[protein] + 3 S-adenosyl-L-homocysteine + 3 H(+). Functionally, methylates ribosomal protein L11. The chain is Ribosomal protein L11 methyltransferase from Campylobacter fetus subsp. fetus (strain 82-40).